The following is a 530-amino-acid chain: Chaperone Ric-8A (530 aa).

Ser435 carries the phosphoserine modification. 2 positions are modified to phosphothreonine: Thr440 and Thr442. A phosphoserine mark is found at Ser501, Ser522, Ser523, and Ser527.

Belongs to the synembryn family. Interacts with GDP-bound G alpha proteins GNAI1, GNAO1 and GNAQ, and with GNA13 with lower affinity. Does not interact with G-alpha proteins when they are in complex with subunits beta and gamma. Interacts (via C-terminus) with RGS14; the interaction stimulates the dissociation of the complex between RGS14 and the active GTP-bound form of GNAI1. Interacts with NCS1; interaction is favored in the absence of Ca(2+) and myristoylation of NCS1 is not required. Expressed in neurons and neurites of the CA1 and CA2 subregions of the hippocampus (at protein level). In adult brain, it is expressed in the neocortex, hippocampus and cerebellum as well as in the pineal gland and ependymal layer.

The protein resides in the cytoplasm. Its subcellular location is the cell cortex. Functionally, chaperone that specifically binds and folds nascent G alpha proteins prior to G protein heterotrimer formation, promoting their stability and activity: folds GNAI1, GNAO1, GNA13 and GNAQ. Does not fold G(s) G-alpha proteins GNAS nor GNAL. Also acts as a guanine nucleotide exchange factor (GEF) for G alpha proteins by stimulating exchange of bound GDP for free GTP. Involved in regulation of microtubule pulling forces during mitotic movement of chromosomes by stimulating G(i)-alpha protein (GNAI1), possibly leading to release G(i)-alpha-GTP and NuMA proteins from the NuMA-GPSM2-G(i)-alpha-GDP complex. Also acts as an activator for G(q)-alpha (GNAQ) protein by enhancing the G(q)-coupled receptor-mediated ERK activation. The sequence is that of Chaperone Ric-8A from Mus musculus (Mouse).